Consider the following 331-residue polypeptide: DNA-directed RNA polymerase subunit alpha (331 aa).

The tract at residues methionine 1 to lysine 237 is alpha N-terminal domain (alpha-NTD). The segment at phenylalanine 251–glutamine 331 is alpha C-terminal domain (alpha-CTD).

The protein belongs to the RNA polymerase alpha chain family. Homodimer. The RNAP catalytic core consists of 2 alpha, 1 beta, 1 beta' and 1 omega subunit. When a sigma factor is associated with the core the holoenzyme is formed, which can initiate transcription.

The catalysed reaction is RNA(n) + a ribonucleoside 5'-triphosphate = RNA(n+1) + diphosphate. Functionally, DNA-dependent RNA polymerase catalyzes the transcription of DNA into RNA using the four ribonucleoside triphosphates as substrates. The chain is DNA-directed RNA polymerase subunit alpha from Blochmanniella floridana.